We begin with the raw amino-acid sequence, 363 residues long: UDP-3-O-acylglucosamine N-acyltransferase (363 aa).

Catalysis depends on His252, which acts as the Proton acceptor.

Belongs to the transferase hexapeptide repeat family. LpxD subfamily. In terms of assembly, homotrimer.

The catalysed reaction is a UDP-3-O-[(3R)-3-hydroxyacyl]-alpha-D-glucosamine + a (3R)-hydroxyacyl-[ACP] = a UDP-2-N,3-O-bis[(3R)-3-hydroxyacyl]-alpha-D-glucosamine + holo-[ACP] + H(+). It participates in bacterial outer membrane biogenesis; LPS lipid A biosynthesis. Catalyzes the N-acylation of UDP-3-O-acylglucosamine using 3-hydroxyacyl-ACP as the acyl donor. Is involved in the biosynthesis of lipid A, a phosphorylated glycolipid that anchors the lipopolysaccharide to the outer membrane of the cell. The polypeptide is UDP-3-O-acylglucosamine N-acyltransferase (Cupriavidus necator (strain ATCC 17699 / DSM 428 / KCTC 22496 / NCIMB 10442 / H16 / Stanier 337) (Ralstonia eutropha)).